The primary structure comprises 345 residues: Anthranilate phosphoribosyltransferase (345 aa).

5-phospho-alpha-D-ribose 1-diphosphate is bound by residues Gly-84, 87–88, Thr-92, 94–97, 112–120, and Ser-124; these read GD, NVTT, and KHGNRSVSS. Gly-84 provides a ligand contact to anthranilate. Thr-96 is a Mg(2+) binding site. Asn-115 lines the anthranilate pocket. An anthranilate-binding site is contributed by Arg-170. Mg(2+) is bound by residues Asp-228 and Glu-229.

It belongs to the anthranilate phosphoribosyltransferase family. In terms of assembly, homodimer. It depends on Mg(2+) as a cofactor.

The catalysed reaction is N-(5-phospho-beta-D-ribosyl)anthranilate + diphosphate = 5-phospho-alpha-D-ribose 1-diphosphate + anthranilate. It functions in the pathway amino-acid biosynthesis; L-tryptophan biosynthesis; L-tryptophan from chorismate: step 2/5. In terms of biological role, catalyzes the transfer of the phosphoribosyl group of 5-phosphorylribose-1-pyrophosphate (PRPP) to anthranilate to yield N-(5'-phosphoribosyl)-anthranilate (PRA). This Corynebacterium aurimucosum (strain ATCC 700975 / DSM 44827 / CIP 107346 / CN-1) (Corynebacterium nigricans) protein is Anthranilate phosphoribosyltransferase.